The sequence spans 553 residues: Coiled-coil domain-containing protein 22 homolog (553 aa).

The interval 236–264 (DSEEPAPPPISTVKPDASAEEEASPIQEL) is disordered. Coiled coils occupy residues 261-286 (IQEL…KAHA), 314-407 (ERTS…QSLA), and 498-549 (NVTK…VEQP).

This sequence belongs to the CCDC22 family.

This Drosophila erecta (Fruit fly) protein is Coiled-coil domain-containing protein 22 homolog.